Here is an 87-residue protein sequence, read N- to C-terminus: U3-theraphotoxin-Hhn1a 17 (87 aa).

Residues 1–24 form the signal peptide; the sequence is MVNVKASMFLTFAGLVLLFVVCYA. Positions 25–52 are excised as a propeptide; sequence SESEEKEFPKEMLSSIFAVDNDFKQEER. 3 cysteine pairs are disulfide-bonded: C54/C67, C61/C72, and C66/C79.

The protein belongs to the neurotoxin 10 (Hwtx-1) family. 51 (Hntx-8) subfamily. Hntx-8 sub-subfamily. Expressed by the venom gland.

It localises to the secreted. In terms of biological role, ion channel inhibitor. The protein is U3-theraphotoxin-Hhn1a 17 of Cyriopagopus hainanus (Chinese bird spider).